The following is a 261-amino-acid chain: Proliferating cell nuclear antigen (261 aa).

Residues Lys14, Lys77, and Lys80 each carry the N6-acetyllysine modification. A DNA-binding region spans residues 61–80; the sequence is RCDRNLAMGVNLTSMSKILK. A disulfide bridge links Cys135 with Cys162. Lys164 participates in a covalent cross-link: Glycyl lysine isopeptide (Lys-Gly) (interchain with G-Cter in SUMO2); alternate. Lys164 is covalently cross-linked (Glycyl lysine isopeptide (Lys-Gly) (interchain with G-Cter in ubiquitin); alternate). Tyr211 is modified (phosphotyrosine; by EGFR). An N6-acetyllysine modification is found at Lys248. Residue Lys254 forms a Glycyl lysine isopeptide (Lys-Gly) (interchain with G-Cter in SUMO2) linkage.

This sequence belongs to the PCNA family. Homotrimer. Interacts with p300/EP300; the interaction occurs on chromatin in UV-irradiated damaged cells. Interacts with CREBBP (via transactivation domain and C-terminus); the interaction occurs on chromatin in UV-irradiated damaged cells. Directly interacts with POLD1, POLD3 and POLD4 subunits of the DNA polymerase delta complex, POLD3 being the major interacting partner; the interaction with POLD3 is inhibited by CDKN1A/p21(CIP1). Forms a complex with activator 1 heteropentamer in the presence of ATP. Interacts with EXO1, POLH, POLK, DNMT1, ERCC5, FEN1, CDC6 and POLDIP2. Interacts with POLB. Interacts with APEX2; this interaction is triggered by reactive oxygen species and increased by misincorporation of uracil in nuclear DNA. Forms a ternary complex with DNTTIP2 and core histone. Interacts with KCTD10 and PPP1R15A. Interacts with SMARCA5/SNF2H. Interacts with BAZ1B/WSTF; the interaction is direct and is required for BAZ1B/WSTF binding to replication foci during S phase. Interacts with HLTF and SHPRH. Interacts with NUDT15; this interaction is disrupted in response to UV irradiation and acetylation. Interacts with CDKN1A/p21(CIP1) and CDT1; interacts via their PIP-box which also recruits the DCX(DTL) complex. The interaction with CDKN1A inhibits POLD3 binding. Interacts with DDX11. Interacts with EGFR; positively regulates PCNA. Interacts with PARPBP. Interacts (when ubiquitinated) with SPRTN; leading to enhance RAD18-mediated PCNA ubiquitination. Interacts (when polyubiquitinated) with ZRANB3. Interacts with SMARCAD1. Interacts with CDKN1C. Interacts with PCLAF (via PIP-box). Interacts with RTEL1 (via PIP-box); the interaction is direct and essential for the suppression of telomere fragility. Interacts with FAM111A (via PIP-box); the interaction is direct and required for PCNA loading on chromatin binding. Interacts with LIG1. Interacts with SETMAR. Interacts with ANKRD17. Interacts with FBXO18/FBH1 (via PIP-box); the interaction recruits the DCX(DTL) complex and promotes ubiquitination and degradation of FBXO18/FBH1. Interacts with POLN. Interacts with SDE2 (via PIP-box); the interaction is direct and prevents ultraviolet light induced monoubiquitination. Component of the replisome complex composed of at least DONSON, MCM2, MCM7, PCNA and TICRR; interaction at least with PCNA occurs during DNA replication. Interacts with MAPK15; the interaction is chromatin binding dependent and prevents MDM2-mediated PCNA destruction by inhibiting the association of PCNA with MDM2. Interacts with PARP10 (via PIP-box). Interacts with DDI2. Interacts with HMCES (via PIP-box). Interacts with TRAIP (via PIP-box). Interacts with UHRF2. Interacts with ALKBH2; this interaction is enhanced during the S-phase of the cell cycle. Interacts with ATAD5; the interaction promotes USP1-mediated PCNA deubiquitination. Interacts (when phosphorylated) with GRB2. Interacts with ANG. Interacts with nuclear UNG; this interaction mediates UNG recruitment to S-phase replication foci. Interacts with ERCC6L2 (via an atypical PIP-box); this interaction facilitates cenrtomeric localization of ERCC6L2. Post-translationally, phosphorylated. Phosphorylation at Tyr-211 by EGFR stabilizes chromatin-associated PCNA. Acetylated by CREBBP and p300/EP300; preferentially acetylated by CREBBP on Lys-80, Lys-13 and Lys-14 and on Lys-77 by p300/EP300 upon loading on chromatin in response to UV irradiation. Lysine acetylation disrupts association with chromatin, hence promoting PCNA ubiquitination and proteasomal degradation in response to UV damage in a CREBBP- and EP300-dependent manner. Acetylation disrupts interaction with NUDT15 and promotes degradation. In terms of processing, ubiquitinated. Following DNA damage, can be either monoubiquitinated to stimulate direct bypass of DNA lesions by specialized DNA polymerases or polyubiquitinated to promote recombination-dependent DNA synthesis across DNA lesions by template switching mechanisms. Following induction of replication stress, monoubiquitinated by the UBE2B-RAD18 complex on Lys-164, leading to recruit translesion (TLS) polymerases, which are able to synthesize across DNA lesions in a potentially error-prone manner. An error-free pathway also exists and requires non-canonical polyubiquitination on Lys-164 through 'Lys-63' linkage of ubiquitin moieties by the E2 complex UBE2N-UBE2V2 and the E3 ligases, HLTF, RNF8 and SHPRH. This error-free pathway, also known as template switching, employs recombination mechanisms to synthesize across the lesion, using as a template the undamaged, newly synthesized strand of the sister chromatid. Monoubiquitination at Lys-164 also takes place in undamaged proliferating cells, and is mediated by the DCX(DTL) complex, leading to enhance PCNA-dependent translesion DNA synthesis. Sumoylated during S phase. Post-translationally, methylated on glutamate residues by ARMT1.

The protein localises to the nucleus. Its function is as follows. Auxiliary protein of DNA polymerase delta and epsilon, is involved in the control of eukaryotic DNA replication by increasing the polymerase's processibility during elongation of the leading strand. Induces a robust stimulatory effect on the 3'-5' exonuclease and 3'-phosphodiesterase, but not apurinic-apyrimidinic (AP) endonuclease, APEX2 activities. Has to be loaded onto DNA in order to be able to stimulate APEX2. Plays a key role in DNA damage response (DDR) by being conveniently positioned at the replication fork to coordinate DNA replication with DNA repair and DNA damage tolerance pathways. Acts as a loading platform to recruit DDR proteins that allow completion of DNA replication after DNA damage and promote postreplication repair: Monoubiquitinated PCNA leads to recruitment of translesion (TLS) polymerases, while 'Lys-63'-linked polyubiquitination of PCNA is involved in error-free pathway and employs recombination mechanisms to synthesize across the lesion. The polypeptide is Proliferating cell nuclear antigen (PCNA) (Cricetulus griseus (Chinese hamster)).